The sequence spans 204 residues: Thymidylate kinase (204 aa).

9–16 (GLDGAGKS) is an ATP binding site.

Belongs to the thymidylate kinase family.

The catalysed reaction is dTMP + ATP = dTDP + ADP. Phosphorylation of dTMP to form dTDP in both de novo and salvage pathways of dTTP synthesis. The sequence is that of Thymidylate kinase from Francisella philomiragia subsp. philomiragia (strain ATCC 25017 / CCUG 19701 / FSC 153 / O#319-036).